A 684-amino-acid polypeptide reads, in one-letter code: Macrolide export ATP-binding/permease protein MacB (684 aa).

Residues 2–243 enclose the ABC transporter domain; the sequence is IQLYGLRKDY…RSRLANSRAE (242 aa). 38–45 serves as a coordination point for ATP; it reads GSSGSGKT. Helical transmembrane passes span 248–268, 275–295, 563–583, 615–635, and 644–664; these read PASA…VLAL, TVLT…TMEL, LVIA…IMLV, VLCV…SVLV, and AMSI…GIVF.

This sequence belongs to the ABC transporter superfamily. Macrolide exporter (TC 3.A.1.122) family. As to quaternary structure, homodimer.

Its subcellular location is the cell inner membrane. In terms of biological role, non-canonical ABC transporter that contains transmembrane domains (TMD), which form a pore in the inner membrane, and an ATP-binding domain (NBD), which is responsible for energy generation. Confers resistance against macrolides. This chain is Macrolide export ATP-binding/permease protein MacB, found in Rhodopirellula baltica (strain DSM 10527 / NCIMB 13988 / SH1).